Reading from the N-terminus, the 771-residue chain is Phosphoglycerate kinase (771 aa).

The phosphoglycerate kinase stretch occupies residues 1–406 (MKKLITDLNL…PGIDAIQNYE (406 aa)). Substrate contacts are provided by residues 20–22 (DLN), Arg-35, 58–61 (HLGR), Arg-118, and Arg-155. Residues Lys-206, Gly-295, Glu-334, and 361–364 (GGDS) contribute to the ATP site. Residues 407–771 (QTYEQYDSQV…KRFWFFGRKR (365 aa)) are unknown.

In the N-terminal section; belongs to the phosphoglycerate kinase family. In terms of assembly, monomer.

Its subcellular location is the cytoplasm. The catalysed reaction is (2R)-3-phosphoglycerate + ATP = (2R)-3-phospho-glyceroyl phosphate + ADP. It functions in the pathway carbohydrate degradation; glycolysis; pyruvate from D-glyceraldehyde 3-phosphate: step 2/5. The chain is Phosphoglycerate kinase (pgk) from Mycoplasmopsis pulmonis (strain UAB CTIP) (Mycoplasma pulmonis).